Here is a 561-residue protein sequence, read N- to C-terminus: Oxygen-dependent choline dehydrogenase (561 aa).

7 to 36 (DYIIVGAGSAGNVLASRLAEDADVTVLLLE) is an FAD binding site. H474 acts as the Proton acceptor in catalysis.

This sequence belongs to the GMC oxidoreductase family. FAD is required as a cofactor.

The enzyme catalyses choline + A = betaine aldehyde + AH2. It catalyses the reaction betaine aldehyde + NAD(+) + H2O = glycine betaine + NADH + 2 H(+). Its pathway is amine and polyamine biosynthesis; betaine biosynthesis via choline pathway; betaine aldehyde from choline (cytochrome c reductase route): step 1/1. Involved in the biosynthesis of the osmoprotectant glycine betaine. Catalyzes the oxidation of choline to betaine aldehyde and betaine aldehyde to glycine betaine at the same rate. In Paraburkholderia xenovorans (strain LB400), this protein is Oxygen-dependent choline dehydrogenase.